The primary structure comprises 615 residues: Cysteine-rich receptor-like protein kinase 1 (615 aa).

The first 28 residues, 1-28, serve as a signal peptide directing secretion; sequence MQICASIAQFLAWVSFLVLLATVGSSSS. 2 Gnk2-homologous domains span residues 29 to 131 and 137 to 237; these read SESL…DRDF and DPTF…THKF. Residues 29 to 266 are Extracellular-facing; the sequence is SESLLNCQPL…SFFPHLSDRD (238 aa). Asparagine 100 and asparagine 165 each carry an N-linked (GlcNAc...) asparagine glycan. Residues 267–287 form a helical membrane-spanning segment; it reads VTRLAIAAISLSILTSLGAFI. At 288-615 the chain is on the cytoplasmic side; the sequence is SYRRVSRKRK…VLMPDEETRV (328 aa). Residues 318–602 enclose the Protein kinase domain; that stretch reads FHDSMKLGQG…FEYPKQPPFL (285 aa). Residues 324-332 and lysine 346 contribute to the ATP site; that span reads LGQGGAGSV. Aspartate 443 functions as the Proton acceptor in the catalytic mechanism.

Belongs to the protein kinase superfamily. Ser/Thr protein kinase family. CRK subfamily. In terms of tissue distribution, expressed in the whole plant at low levels.

It localises to the membrane. It catalyses the reaction L-seryl-[protein] + ATP = O-phospho-L-seryl-[protein] + ADP + H(+). It carries out the reaction L-threonyl-[protein] + ATP = O-phospho-L-threonyl-[protein] + ADP + H(+). The chain is Cysteine-rich receptor-like protein kinase 1 from Arabidopsis thaliana (Mouse-ear cress).